We begin with the raw amino-acid sequence, 344 residues long: Heat-inducible transcription repressor HrcA (344 aa).

Belongs to the HrcA family.

Its function is as follows. Negative regulator of class I heat shock genes (grpE-dnaK-dnaJ and groELS operons). Prevents heat-shock induction of these operons. This Geobacillus stearothermophilus (Bacillus stearothermophilus) protein is Heat-inducible transcription repressor HrcA.